Reading from the N-terminus, the 324-residue chain is ATP-dependent 6-phosphofructokinase (324 aa).

G11 serves as a coordination point for ATP. Residue 21–25 (RAVVR) coordinates ADP. Residues 72 to 73 (RE) and 102 to 105 (GNGS) contribute to the ATP site. N103 contributes to the Mg(2+) binding site. 126–128 (TID) lines the substrate pocket. D128 functions as the Proton acceptor in the catalytic mechanism. K155 provides a ligand contact to ADP. Substrate contacts are provided by residues R163 and 170–172 (MGR). ADP is bound by residues 186–188 (GAE) and 214–216 (KNF). Substrate-binding positions include E223, R248, and 254-257 (YIQR).

The protein belongs to the phosphofructokinase type A (PFKA) family. ATP-dependent PFK group I subfamily. Prokaryotic clade 'B1' sub-subfamily. As to quaternary structure, homotetramer. Mg(2+) is required as a cofactor.

It localises to the cytoplasm. The catalysed reaction is beta-D-fructose 6-phosphate + ATP = beta-D-fructose 1,6-bisphosphate + ADP + H(+). It participates in carbohydrate degradation; glycolysis; D-glyceraldehyde 3-phosphate and glycerone phosphate from D-glucose: step 3/4. Its activity is regulated as follows. Allosterically activated by ADP and other diphosphonucleosides, and allosterically inhibited by phosphoenolpyruvate. Its function is as follows. Catalyzes the phosphorylation of D-fructose 6-phosphate to fructose 1,6-bisphosphate by ATP, the first committing step of glycolysis. The polypeptide is ATP-dependent 6-phosphofructokinase (Sulfurihydrogenibium sp. (strain YO3AOP1)).